The following is a 711-amino-acid chain: L-type lectin-domain containing receptor kinase VIII.2 (711 aa).

Positions methionine 1 to glycine 30 are cleaved as a signal peptide. The Extracellular portion of the chain corresponds to aspartate 31–alanine 315. A legume-lectin like region spans residues threonine 35 to serine 260. Residue asparagine 57 is glycosylated (N-linked (GlcNAc...) asparagine). Positions glutamate 265–asparagine 306 are disordered. Over residues serine 269–serine 281 the composition is skewed to pro residues. The span at proline 282–serine 291 shows a compositional bias: low complexity. Residues valine 316–tryptophan 336 traverse the membrane as a helical segment. Over valine 337 to valine 711 the chain is Cytoplasmic. In terms of domain architecture, Protein kinase spans phenylalanine 374 to valine 656. ATP-binding positions include isoleucine 380 to valine 388 and lysine 403. The Proton acceptor role is filled by aspartate 497.

This sequence in the C-terminal section; belongs to the protein kinase superfamily. Ser/Thr protein kinase family. It in the N-terminal section; belongs to the leguminous lectin family.

The protein localises to the cell membrane. It catalyses the reaction L-seryl-[protein] + ATP = O-phospho-L-seryl-[protein] + ADP + H(+). It carries out the reaction L-threonyl-[protein] + ATP = O-phospho-L-threonyl-[protein] + ADP + H(+). In terms of biological role, involved in resistance response to the pathogenic oomycetes Phytophthora infestans and Phytophthora capsici. The sequence is that of L-type lectin-domain containing receptor kinase VIII.2 from Arabidopsis thaliana (Mouse-ear cress).